Consider the following 314-residue polypeptide: MTAQRKKISLIGAGNIGGTLAHMIALRELGDVILLDVSDGIPQGKALDITESSPIDRSNVNITGTNRYEDIKNSDAIIITAGIARKPGMSRDDLLQTNAAVMKEVGENIKKHSPNAFVIVVTNPLDAMVSVVYKSSSLPTNMIVGMAGVLDSARFRYFLASELNISVEDVSAFVLGGHGDTMVPLINYASIAGIPLTQIIEMGVITRGKVDEIVERTRNGGKEIVDLLKSGSAYYAPASSAISMLESYLKDKRRILPCAAYLNGEYGVKDLFIGVPTIIGKNGVEKVLEVKMNDSEQEMFYKSVSAVKELCQLN.

NAD(+)-binding positions include 12-17 (GAGNIG) and Asp36. Residues Arg85 and Arg91 each coordinate substrate. NAD(+)-binding positions include Asn98 and 121–123 (VTN). Substrate-binding residues include Asn123 and Arg154. His178 functions as the Proton acceptor in the catalytic mechanism.

It belongs to the LDH/MDH superfamily. MDH type 3 family.

It carries out the reaction (S)-malate + NAD(+) = oxaloacetate + NADH + H(+). Catalyzes the reversible oxidation of malate to oxaloacetate. This is Malate dehydrogenase from Wolbachia pipientis subsp. Culex pipiens (strain wPip).